The primary structure comprises 512 residues: Secreted triacylglycerol lipase LIP5 (512 aa).

An N-terminal signal peptide occupies residues 1-17 (MMYASLVHWLALAVALA). C118 and C292 are oxidised to a cystine. S203 functions as the Nucleophile in the catalytic mechanism. An N-linked (GlcNAc...) asparagine glycan is attached at N316. The active site involves D352. Residue N361 is glycosylated (N-linked (GlcNAc...) asparagine). Residue H386 is part of the active site. A glycan (N-linked (GlcNAc...) asparagine) is linked at N453. Positions 480-512 (KGDISPGEGGDHTKESKKAAAKFKAEKKHGKHH) are disordered. A compositionally biased stretch (basic and acidic residues) spans 488-497 (GGDHTKESKK). Over residues 498-512 (AAAKFKAEKKHGKHH) the composition is skewed to basic residues.

It belongs to the AB hydrolase superfamily. Lipase family. Class Lip subfamily.

The protein resides in the secreted. The enzyme catalyses a triacylglycerol + H2O = a diacylglycerol + a fatty acid + H(+). It carries out the reaction a monoacylglycerol + H2O = glycerol + a fatty acid + H(+). It catalyses the reaction a diacylglycerol + H2O = a monoacylglycerol + a fatty acid + H(+). Secreted lipase that hydrolyzes acylglycerol lipids such as triacylglycerols and consequently releases free fatty acid. Can hydrolyze 4-nitrophenyl palmitate to release 4-nitrophenol and palmitoic acid. Due to an absence of fatty acid synthase genes in Malassezia species, secretory lipases are essential for the yeast to generate free fatty acids from degradation of sebum and assimilate them as lipid sources for growth. Plays an essential role at the pathogen-host interface during disease progression. The sequence is that of Secreted triacylglycerol lipase LIP5 from Malassezia restricta (strain ATCC 96810 / NBRC 103918 / CBS 7877) (Seborrheic dermatitis infection agent).